Consider the following 159-residue polypeptide: MNISIISVGKIKEKFLKAAIDEYSKRLSKYCKLNIIEVTDEKTPDNASLKEENIIKEKEGNLILKHIKDNSFVIALDLKGKAITSEEFSDLIENCRLTGNSTIAFVIGGSLGLSEQVLSRANYKLSFSKMTFPHQLFRVMLLEQVYRAFRILCGEPYHK.

S-adenosyl-L-methionine-binding positions include L76, G108, and 127–132; that span reads FSKMTF.

It belongs to the RNA methyltransferase RlmH family. Homodimer.

The protein resides in the cytoplasm. It carries out the reaction pseudouridine(1915) in 23S rRNA + S-adenosyl-L-methionine = N(3)-methylpseudouridine(1915) in 23S rRNA + S-adenosyl-L-homocysteine + H(+). In terms of biological role, specifically methylates the pseudouridine at position 1915 (m3Psi1915) in 23S rRNA. The polypeptide is Ribosomal RNA large subunit methyltransferase H (Clostridium botulinum (strain Okra / Type B1)).